Here is a 217-residue protein sequence, read N- to C-terminus: 3,4-dihydroxy-2-butanone 4-phosphate synthase (217 aa).

D-ribulose 5-phosphate contacts are provided by residues 37–38 (RE), aspartate 42, 150–154 (RRGHT), and glutamate 174. Glutamate 38 contributes to the Mg(2+) binding site. Histidine 153 is a binding site for Mg(2+).

Belongs to the DHBP synthase family. Homodimer. Requires Mg(2+) as cofactor. Mn(2+) serves as cofactor.

The enzyme catalyses D-ribulose 5-phosphate = (2S)-2-hydroxy-3-oxobutyl phosphate + formate + H(+). It functions in the pathway cofactor biosynthesis; riboflavin biosynthesis; 2-hydroxy-3-oxobutyl phosphate from D-ribulose 5-phosphate: step 1/1. Its function is as follows. Catalyzes the conversion of D-ribulose 5-phosphate to formate and 3,4-dihydroxy-2-butanone 4-phosphate. This chain is 3,4-dihydroxy-2-butanone 4-phosphate synthase, found in Shewanella sp. (strain W3-18-1).